Here is a 115-residue protein sequence, read N- to C-terminus: Holo-[acyl-carrier-protein] synthase (115 aa).

Asp8 and Glu56 together coordinate Mg(2+).

This sequence belongs to the P-Pant transferase superfamily. AcpS family. Mg(2+) is required as a cofactor.

It is found in the cytoplasm. The enzyme catalyses apo-[ACP] + CoA = holo-[ACP] + adenosine 3',5'-bisphosphate + H(+). Its function is as follows. Transfers the 4'-phosphopantetheine moiety from coenzyme A to a Ser of acyl-carrier-protein. This Ureaplasma parvum serovar 3 (strain ATCC 27815 / 27 / NCTC 11736) protein is Holo-[acyl-carrier-protein] synthase.